The following is a 363-amino-acid chain: Probable methyltransferase-like protein 24 (363 aa).

Positions 1 to 38 (MGTAKPPGRGCGALPRWLLGAALLLGLRLCMELRHAGS) are cleaved as a signal peptide. Residues 37–62 (GSGPPGRRDLRGPPRTHLLPAPGPLR) are disordered.

The protein belongs to the methyltransferase superfamily.

It is found in the secreted. Probable methyltransferase. The polypeptide is Probable methyltransferase-like protein 24 (Mettl24) (Rattus norvegicus (Rat)).